Here is a 345-residue protein sequence, read N- to C-terminus: L-threonine 3-dehydrogenase (345 aa).

Zn(2+) is bound at residue Cys-42. Active-site charge relay system residues include Thr-44 and His-47. Residues His-67, Glu-68, Cys-97, Cys-100, Cys-103, and Cys-111 each coordinate Zn(2+). Residues Ile-179, Asp-199, Arg-204, 266 to 268, and 290 to 291 contribute to the NAD(+) site; these read LGI and IY.

It belongs to the zinc-containing alcohol dehydrogenase family. As to quaternary structure, homotetramer. Zn(2+) serves as cofactor.

Its subcellular location is the cytoplasm. The enzyme catalyses L-threonine + NAD(+) = (2S)-2-amino-3-oxobutanoate + NADH + H(+). Its pathway is amino-acid degradation; L-threonine degradation via oxydo-reductase pathway; glycine from L-threonine: step 1/2. In terms of biological role, catalyzes the NAD(+)-dependent oxidation of L-threonine to 2-amino-3-ketobutyrate. In Rhizobium etli (strain ATCC 51251 / DSM 11541 / JCM 21823 / NBRC 15573 / CFN 42), this protein is L-threonine 3-dehydrogenase.